We begin with the raw amino-acid sequence, 371 residues long: tRNA-specific 2-thiouridylase MnmA (371 aa).

Residues 16-23 (GMSGGVDS) and Met-42 contribute to the ATP site. An interaction with target base in tRNA region spans residues 102–104 (NPD). The active-site Nucleophile is the Cys-107. A disulfide bridge connects residues Cys-107 and Cys-204. Gly-132 contributes to the ATP binding site. The tract at residues 154–156 (KDQ) is interaction with tRNA. Cys-204 (cysteine persulfide intermediate) is an active-site residue. The interval 316-317 (RY) is interaction with tRNA.

Belongs to the MnmA/TRMU family.

The protein resides in the cytoplasm. It catalyses the reaction S-sulfanyl-L-cysteinyl-[protein] + uridine(34) in tRNA + AH2 + ATP = 2-thiouridine(34) in tRNA + L-cysteinyl-[protein] + A + AMP + diphosphate + H(+). Catalyzes the 2-thiolation of uridine at the wobble position (U34) of tRNA, leading to the formation of s(2)U34. This chain is tRNA-specific 2-thiouridylase MnmA, found in Shewanella piezotolerans (strain WP3 / JCM 13877).